The chain runs to 349 residues: Isopentenyl-diphosphate delta-isomerase (349 aa).

A substrate-binding site is contributed by 12 to 13 (RK). FMN-binding positions include 69–71 (GMT), S99, and N128. Position 158 (Q158) interacts with substrate. E159 provides a ligand contact to Mg(2+). FMN is bound by residues K189, S214, T219, 265–267 (GIR), and 286–287 (SG).

This sequence belongs to the IPP isomerase type 2 family. In terms of assembly, homooctamer. Dimer of tetramers. FMN serves as cofactor. NADPH is required as a cofactor. The cofactor is Mg(2+).

The protein localises to the cytoplasm. The catalysed reaction is isopentenyl diphosphate = dimethylallyl diphosphate. Involved in the biosynthesis of isoprenoids. Catalyzes the 1,3-allylic rearrangement of the homoallylic substrate isopentenyl (IPP) to its allylic isomer, dimethylallyl diphosphate (DMAPP). The protein is Isopentenyl-diphosphate delta-isomerase of Latilactobacillus sakei subsp. sakei (strain 23K) (Lactobacillus sakei subsp. sakei).